We begin with the raw amino-acid sequence, 236 residues long: Leucyl/phenylalanyl-tRNA--protein transferase (236 aa).

This sequence belongs to the L/F-transferase family.

The protein resides in the cytoplasm. It catalyses the reaction N-terminal L-lysyl-[protein] + L-leucyl-tRNA(Leu) = N-terminal L-leucyl-L-lysyl-[protein] + tRNA(Leu) + H(+). The catalysed reaction is N-terminal L-arginyl-[protein] + L-leucyl-tRNA(Leu) = N-terminal L-leucyl-L-arginyl-[protein] + tRNA(Leu) + H(+). It carries out the reaction L-phenylalanyl-tRNA(Phe) + an N-terminal L-alpha-aminoacyl-[protein] = an N-terminal L-phenylalanyl-L-alpha-aminoacyl-[protein] + tRNA(Phe). Functions in the N-end rule pathway of protein degradation where it conjugates Leu, Phe and, less efficiently, Met from aminoacyl-tRNAs to the N-termini of proteins containing an N-terminal arginine or lysine. This chain is Leucyl/phenylalanyl-tRNA--protein transferase, found in Aliivibrio salmonicida (strain LFI1238) (Vibrio salmonicida (strain LFI1238)).